The primary structure comprises 165 residues: Lipoprotein signal peptidase (165 aa).

3 consecutive transmembrane segments (helical) span residues 9 to 29 (PFLWISAVAFFTDLITKLAVV), 65 to 85 (WQKYFFILLALVVSFMILFFL), and 97 to 119 (TGYALMVGGALANAADRAYHGFV). Catalysis depends on residues aspartate 121 and aspartate 139. Residues 134–154 (VFNIADVAICIGAGLLAIDAF) traverse the membrane as a helical segment.

This sequence belongs to the peptidase A8 family.

The protein resides in the cell inner membrane. It catalyses the reaction Release of signal peptides from bacterial membrane prolipoproteins. Hydrolyzes -Xaa-Yaa-Zaa-|-(S,diacylglyceryl)Cys-, in which Xaa is hydrophobic (preferably Leu), and Yaa (Ala or Ser) and Zaa (Gly or Ala) have small, neutral side chains.. It participates in protein modification; lipoprotein biosynthesis (signal peptide cleavage). This protein specifically catalyzes the removal of signal peptides from prolipoproteins. The polypeptide is Lipoprotein signal peptidase (Histophilus somni (strain 129Pt) (Haemophilus somnus)).